A 438-amino-acid polypeptide reads, in one-letter code: Tol-Pal system protein TolB (438 aa).

The first 35 residues, 1–35 (MITMKNILKLRATGLLLLLLLMISVLGNGIGQAMA), serve as a signal peptide directing secretion.

This sequence belongs to the TolB family. As to quaternary structure, the Tol-Pal system is composed of five core proteins: the inner membrane proteins TolA, TolQ and TolR, the periplasmic protein TolB and the outer membrane protein Pal. They form a network linking the inner and outer membranes and the peptidoglycan layer.

It is found in the periplasm. In terms of biological role, part of the Tol-Pal system, which plays a role in outer membrane invagination during cell division and is important for maintaining outer membrane integrity. This chain is Tol-Pal system protein TolB, found in Desulfotalea psychrophila (strain LSv54 / DSM 12343).